The primary structure comprises 388 residues: Glucose-6-phosphate/phosphate translocator 1, chloroplastic (388 aa).

The N-terminal 65 residues, M1–C65, are a transit peptide targeting the chloroplast. A run of 8 helical transmembrane segments spans residues L95–N115, S129–V149, F158–V178, F211–L231, E233–F253, Y273–G293, L305–L325, and T363–Y383. An EamA domain is found at N112 to S229.

The protein belongs to the TPT transporter family. GPT (TC 2.A.7.9) subfamily. In terms of tissue distribution, expressed in seeds, flowers, rosette leaves, and roots, with highest levels found in stamens. Found in the root cap, in guard cells and in mesophyll cells.

The protein localises to the plastid. Its subcellular location is the chloroplast membrane. The protein resides in the endoplasmic reticulum membrane. It localises to the peroxisome membrane. Its function is as follows. Glucose 6-phosphate (Glc6P) transporter. Also transports inorganic phosphate, 3-phosphoglycerate, triose phosphates and, to a leser extent, phosphoenolpyruvate. Responsible for the transport of Glc6P into plastids of heterotrophic tissues where it can be used as a carbon source for starch biosynthesis, as substrate for fatty acid biosynthesis or as substrate for NADPH generation via the oxidative pentose phosphate pathway (OPPP). Required for pollen maturation and embryo sac development. Preferentially exchanges Glc6P for ribulose-5-phosphate (Ru5P) in reconstituted yeast proteoliposomes. May supply the substrate (Glc6P) for OPPP reactions inside peroxisomes and exchange it with the product Ru5P which leaves the organelle. The protein is Glucose-6-phosphate/phosphate translocator 1, chloroplastic of Arabidopsis thaliana (Mouse-ear cress).